The following is a 380-amino-acid chain: Alpha-glucoside transport system permease protein AglG (380 aa).

A run of 6 helical transmembrane segments spans residues 13–33 (VHLSVLLLVLLWTLPTAGLLI), 179–199 (VIPILIAAFAAYALAWMPFPG), 202–222 (VLLAVVVGLLVVPLQMSLIPL), 239–259 (TYMGIWLAHTGFGLPLAIYLL), 288–308 (IILPLSFPALASFAIFQFLWT), and 344–364 (EILTASAFITIVVPLIVFFAL). The region spanning 167–364 (FLNSLTVAVP…VVPLIVFFAL (198 aa)) is the ABC transmembrane type-1 domain.

It belongs to the binding-protein-dependent transport system permease family. MalFG subfamily.

The protein localises to the cell inner membrane. Part of the binding-protein-dependent transport system for alpha-glucosides such as sucrose, maltose and trehalose. Probably responsible for the translocation of the substrate across the membrane. This Rhizobium meliloti (strain 1021) (Ensifer meliloti) protein is Alpha-glucoside transport system permease protein AglG (aglG).